We begin with the raw amino-acid sequence, 1631 residues long: ALK tyrosine kinase receptor (1631 aa).

The N-terminal stretch at 1 to 18 is a signal peptide; the sequence is MGSVGLLGLLLLRLSVTA. The Extracellular portion of the chain corresponds to 19–1053; sequence SGSGAGTGSG…PHLPLSLVLS (1035 aa). The tract at residues 20-53 is disordered; sequence GSGAGTGSGTGSGTGTGTGQLVGSPATGPALQPR. Gly residues predominate over residues 21-39; that stretch reads SGAGTGSGTGSGTGTGTGQ. The segment at 60–82 is heparin-binding region; the sequence is RLQRKSLAVDFVVPSLFRVYARD. Asn-185, Asn-260, Asn-301, Asn-340, Asn-427, Asn-440, Asn-461, Asn-579, Asn-587, and Asn-643 each carry an N-linked (GlcNAc...) asparagine glycan. Positions 280 to 443 constitute an MAM 1 domain; that stretch reads LECSFDFPCE…DFFALKNCSE (164 aa). In terms of domain architecture, MAM 2 spans 494-652; it reads FYCNFENGFC…NISISLDCYL (159 aa). Residues Cys-703 and Cys-716 are joined by a disulfide bond. A glycan (N-linked (GlcNAc...) asparagine) is linked at Asn-724. Residues Cys-798 and Cys-809 are joined by a disulfide bond. N-linked (GlcNAc...) asparagine glycans are attached at residues Asn-823, Asn-878, Asn-879, and Asn-901. Cys-921 and Cys-943 are joined by a disulfide. The N-linked (GlcNAc...) asparagine glycan is linked to Asn-1001. Disulfide bonds link Cys-1002/Cys-1010, Cys-1005/Cys-1021, and Cys-1023/Cys-1036. Positions 1002-1040 are EGF-like; that stretch reads CSHCEGDECHMDPESHKVICFCDHGTVLAEDGVSCIVSP. A helical transmembrane segment spans residues 1054–1074; the sequence is VVTSALVAALVLAFSGIMIVY. Topologically, residues 1075–1631 are cytoplasmic; the sequence is RRKHQELQAM…DALLKTPPGP (557 aa). A Protein kinase domain is found at 1131 to 1407; sequence ITLIRGLGHG…IEYCTQDPDV (277 aa). Residues 1137-1145 and Lys-1165 each bind ATP; that span reads LGHGAFGEV. Asp-1264 functions as the Proton acceptor in the catalytic mechanism. Disordered stretches follow at residues 1423–1493, 1526–1554, and 1609–1631; these read EEKV…GHVN, WFTE…REGS, and FEGT…PPGP.

In terms of assembly, homodimer; homodimerizes following heparin- and ligand-binding. Interacts with CBL, IRS1, PIK3R1 and PLCG1. Interacts with FRS2 and SHC1. Interacts with PTN and MDK. In terms of processing, phosphorylated at tyrosine residues by autocatalysis, which activates kinase activity. In cells not stimulated by a ligand, receptor protein tyrosine phosphatase beta and zeta complex (PTPRB/PTPRZ1) dephosphorylates ALK at the sites in ALK that are undergoing autophosphorylation through autoactivation.

The protein resides in the cell membrane. The catalysed reaction is L-tyrosyl-[protein] + ATP = O-phospho-L-tyrosyl-[protein] + ADP + H(+). Its activity is regulated as follows. Activated upon ALKAL2 ligand-binding. ALKAL2-driven activation is coupled with heparin-binding. Following ligand-binding, homodimerizes and autophosphorylates, activating its kinase activity. Inactivated through dephosphorylation by receptor protein tyrosine phosphatase beta and zeta complex (PTPRB/PTPRZ1) when there is no stimulation by a ligand. In terms of biological role, neuronal receptor tyrosine kinase that is essentially and transiently expressed in specific regions of the central and peripheral nervous systems and plays an important role in the genesis and differentiation of the nervous system. Also acts as a key thinness protein involved in the resistance to weight gain: in hypothalamic neurons, controls energy expenditure acting as a negative regulator of white adipose tissue lipolysis and sympathetic tone to fine-tune energy homeostasis. Following activation by ALKAL2 ligand at the cell surface, transduces an extracellular signal into an intracellular response. In contrast, ALKAL1 is not a potent physiological ligand for ALK. Ligand-binding to the extracellular domain induces tyrosine kinase activation, leading to activation of the mitogen-activated protein kinase (MAPK) pathway. Phosphorylates almost exclusively at the first tyrosine of the Y-x-x-x-Y-Y motif. Induces tyrosine phosphorylation of CBL, FRS2, IRS1 and SHC1, as well as of the MAP kinases MAPK1/ERK2 and MAPK3/ERK1. ALK activation may also be regulated by pleiotrophin (PTN) and midkine (MDK). PTN-binding induces MAPK pathway activation, which is important for the anti-apoptotic signaling of PTN and regulation of cell proliferation. MDK-binding induces phosphorylation of the ALK target insulin receptor substrate (IRS1), activates mitogen-activated protein kinases (MAPKs) and PI3-kinase, resulting also in cell proliferation induction. Drives NF-kappa-B activation, probably through IRS1 and the activation of the AKT serine/threonine kinase. Recruitment of IRS1 to activated ALK and the activation of NF-kappa-B are essential for the autocrine growth and survival signaling of MDK. The polypeptide is ALK tyrosine kinase receptor (Canis lupus familiaris (Dog)).